A 153-amino-acid chain; its full sequence is Transcriptional repressor NrdR (153 aa).

A zinc finger spans residues 3–34 (CPFCNNISTNVKDSRSIEDDMLIRRRRVCPVC). The 91-residue stretch at 49-139 (LMVIKKNGGL…VYMNFKNIND (91 aa)) folds into the ATP-cone domain.

Belongs to the NrdR family. The cofactor is Zn(2+).

Functionally, negatively regulates transcription of bacterial ribonucleotide reductase nrd genes and operons by binding to NrdR-boxes. The protein is Transcriptional repressor NrdR of Ehrlichia ruminantium (strain Gardel).